A 79-amino-acid chain; its full sequence is NADH-ubiquinone oxidoreductase chain 4 (79 aa).

A run of 2 helical transmembrane segments spans residues 24–44 (SYTL…LANI) and 54–74 (LLIN…WFLL).

This sequence belongs to the complex I subunit 4 family.

It localises to the mitochondrion membrane. The enzyme catalyses a ubiquinone + NADH + 5 H(+)(in) = a ubiquinol + NAD(+) + 4 H(+)(out). In terms of biological role, core subunit of the mitochondrial membrane respiratory chain NADH dehydrogenase (Complex I) that is believed to belong to the minimal assembly required for catalysis. Complex I functions in the transfer of electrons from NADH to the respiratory chain. The immediate electron acceptor for the enzyme is believed to be ubiquinone. The sequence is that of NADH-ubiquinone oxidoreductase chain 4 (ND4) from Simulium vittatum (Striped black fly).